A 139-amino-acid chain; its full sequence is MIKEFREFISRGNVIDLAVGVIVGAAFTAIINSLVNDIINPLIGLLVGGRADFSNYFIPLAGQTATTLAEAQAAGPVLAYGSFLTAVINFLLIAFVVFMIVRTVNRMRSKPEAVPPAPPEPTPSERLLAEIRDLLARQG.

Helical transmembrane passes span 14-34 (VIDL…INSL) and 81-101 (GSFL…FMIV).

It belongs to the MscL family. Homopentamer.

It is found in the cell membrane. Channel that opens in response to stretch forces in the membrane lipid bilayer. May participate in the regulation of osmotic pressure changes within the cell. This Chloroflexus aurantiacus (strain ATCC 29366 / DSM 635 / J-10-fl) protein is Large-conductance mechanosensitive channel.